The sequence spans 313 residues: Homoserine O-succinyltransferase (313 aa).

Cys142 acts as the Acyl-thioester intermediate in catalysis. Residues Lys163 and Ser192 each coordinate substrate. His235 (proton acceptor) is an active-site residue. Glu237 is an active-site residue. Arg249 contributes to the substrate binding site.

The protein belongs to the MetA family.

Its subcellular location is the cytoplasm. It carries out the reaction L-homoserine + succinyl-CoA = O-succinyl-L-homoserine + CoA. Its pathway is amino-acid biosynthesis; L-methionine biosynthesis via de novo pathway; O-succinyl-L-homoserine from L-homoserine: step 1/1. Transfers a succinyl group from succinyl-CoA to L-homoserine, forming succinyl-L-homoserine. The polypeptide is Homoserine O-succinyltransferase (Shewanella baltica (strain OS223)).